Here is a 272-residue protein sequence, read N- to C-terminus: Phosphate import ATP-binding protein PstB (272 aa).

In terms of domain architecture, ABC transporter spans 26–267 (LDIKNLDLYY…PSEKQTEDYI (242 aa)). 58-65 (GPSGCGKS) provides a ligand contact to ATP.

The protein belongs to the ABC transporter superfamily. Phosphate importer (TC 3.A.1.7) family. In terms of assembly, the complex is composed of two ATP-binding proteins (PstB), two transmembrane proteins (PstC and PstA) and a solute-binding protein (PstS).

It is found in the cell inner membrane. It catalyses the reaction phosphate(out) + ATP + H2O = ADP + 2 phosphate(in) + H(+). Its function is as follows. Part of the ABC transporter complex PstSACB involved in phosphate import. Responsible for energy coupling to the transport system. The chain is Phosphate import ATP-binding protein PstB from Idiomarina loihiensis (strain ATCC BAA-735 / DSM 15497 / L2-TR).